Reading from the N-terminus, the 121-residue chain is Putative inactive aspartokinase 3 HI_1632 (121 aa).

This sequence belongs to the aspartokinase family.

This Haemophilus influenzae (strain ATCC 51907 / DSM 11121 / KW20 / Rd) protein is Putative inactive aspartokinase 3 HI_1632.